The following is a 946-amino-acid chain: Inter-alpha-trypsin inhibitor heavy chain H2 (946 aa).

A signal peptide spans 1–18 (MQRLACVLIWLFLLEEQA). Positions 19–54 (FEIPANEYSEFAGYSNLVELAPDKFPFVQENRRYQR) are excised as a propeptide. Residues 56–185 (LPEESGEMTD…KVQFELHYQE (130 aa)) enclose the VIT domain. Position 60 is a phosphoserine (Ser-60). N-linked (GlcNAc...) asparagine glycans are attached at residues Asn-118 and Asn-263. 2 positions are modified to 4-carboxyglutamate: Glu-282 and Glu-283. One can recognise a VWFA domain in the interval 308-468 (PKNILFVIDV…YDFLKRLSNE (161 aa)). The N-linked (GlcNAc...) asparagine glycan is linked to Asn-445. A Phosphoserine modification is found at Ser-466. Asn-578 carries N-linked (GlcNAc...) asparagine glycosylation. Asp-702 carries the aspartate 1-(chondroitin 4-sulfate)-ester modification. Positions 703–946 (PHFIIYLPKS…PQLYSFLKRP (244 aa)) are excised as a propeptide. Ser-886 is modified (phosphoserine).

This sequence belongs to the ITIH family. As to quaternary structure, I-alpha-I plasma protease inhibitors are assembled from one or two heavy chains (HC) and one light chain, bikunin. Inter-alpha-inhibitor (I-alpha-I) is composed of ITIH1/HC1, ITIH2/HC2 and bikunin. Post-translationally, heavy chains are linked to bikunin via chondroitin 4-sulfate esterified to the alpha-carboxyl of the C-terminal aspartate after propeptide cleavage. Phosphorylated by FAM20C in the extracellular medium.

It is found in the secreted. May act as a carrier of hyaluronan in serum or as a binding protein between hyaluronan and other matrix protein, including those on cell surfaces in tissues to regulate the localization, synthesis and degradation of hyaluronan which are essential to cells undergoing biological processes. This is Inter-alpha-trypsin inhibitor heavy chain H2 (ITIH2) from Mesocricetus auratus (Golden hamster).